Here is a 209-residue protein sequence, read N- to C-terminus: Large ribosomal subunit protein uL3 (209 aa).

Positions 122-152 (AIKRHGQSRGPMSHGSRYHRRPGSMGPVDPN) are disordered.

It belongs to the universal ribosomal protein uL3 family. As to quaternary structure, part of the 50S ribosomal subunit. Forms a cluster with proteins L14 and L19. Interacts with RNA helicase CshA.

One of the primary rRNA binding proteins, it binds directly near the 3'-end of the 23S rRNA, where it nucleates assembly of the 50S subunit. Strongly stimulates 23S rRNA precursor processing by mini-ribonuclease 3 (MrnC); 20-30% DMSO can replace L3, suggesting the protein may alter rRNA conformation. The chain is Large ribosomal subunit protein uL3 from Bacillus subtilis (strain 168).